The following is a 1877-amino-acid chain: MLGSSVKSVQPEVELSSGGGDEGADEPRGAGRKAAAADGRGMLPKRAKAPGGGGGMAKASAAELKVFKSGSVDSRVPGGPPASNLRKQKSLTNLSFLTDSEKKLQLYEPEWSDDMAKAPKGLGKVGSKGREAPLMSKTLSKSEHSLFQAKGSPAGGAKTPLAPLAPNLGKPSRIPRGPYAEVKPLSKAPEAAVSEDGKSDDELLSSKAKAQKSSGPVPSAKGQEERAFLKVDPELVVTVLGDLEQLLFSQMLDPESQRKRTVQNVLDLRQNLEETMSSLRGSQVTHSSLEMTCYDSDDANPRSVSSLSNRSSPLSWRYGQSSPRLQAGDAPSVGGSCRSEGTPAWYMHGERAHYSHTMPMRSPSKLSHISRLELVESLDSDEVDLKSGYMSDSDLMGKTMTEDDDITTGWDESSSISSGLSDASDNLSSEEFNASSSLNSLPSTPTASRRNSTIVLRTDSEKRSLAESGLSWFSESEEKAPKKLEYDSGSLKMEPGTSKWRRERPESCDDSSKGGELKKPISLGHPGSLKKGKTPPVAVTSPITHTAQSALKVAGKPEGKATDKGKLAVKNTGLQRSSSDAGRDRLSDAKKPPSGIARPSTSGSFGYKKPPPATGTATVMQTGGSATLSKIQKSSGIPVKPVNGRKTSLDVSNSAEPGFLAPGARSNIQYRSLPRPAKSSSMSVTGGRGGPRPVSSSIDPSLLSTKQGGLTPSRLKEPTKVASGRTTPAPVNQTDREKEKAKAKAVALDSDNISLKSIGSPESTPKNQASHPTATKLAELPPTPLRATAKSFVKPPSLANLDKVNSNSLDLPSSSDTTHASKVPDLHATSSASGGPLPSCFTPSPAPILNINSASFSQGLELMSGFSVPKETRMYPKLSGLHRSMESLQMPMSLPSAFPSSTPVPTPPAPPAAPTEEETEELTWSGSPRAGQLDSNQRDRNTLPKKGLRYQLQSQEETKERRHSHTIGGLPESDDQSELPSPPALPMSLSAKGQLTNIVSPTAATTPRITRSNSIPTHEAAFELYSGSQMGSTLSLAERPKGMIRSGSFRDPTDDVHGSVLSLASSASSTYSSAEERMQSEQIRKLRRELESSQEKVATLTSQLSANANLVAAFEQSLVNMTSRLRHLAETAEEKDTELLDLRETIDFLKKKNSEAQAVIQGALNASETTPKELRIKRQNSSDSISSLNSITSHSSIGSSKDADAKKKKKKSWVYELRSSFNKAFSIKKGPKSASSYSDIEEIATPDSSAPSSPKLQHGSTETASPSIKSSTSSSVGTDVTEGPAHPAPHTRLFHANEEEEPEKKEVSELRSELWEKEMKLTDIRLEALNSAHQLDQLRETMHNMQLEVDLLKAENDRLKVAPGPSSGSTPGQVPGSSALSSPRRSLGLALTHSFGPSLADTDLSPMDGISTCGPKEEVTLRVVVRMPPQHIIKGDLKQQEFFLGCSKVSGKVDWKMLDEAVFQVFKDYISKMDPASTLGLSTESIHGYSISHVKRVLDAEPPEMPPCRRGVNNISVSLKGLKEKCVDSLVFETLIPKPMMQHYISLLLKHRRLVLSGPSGTGKTYLTNRLAEYLVERSGREVTEGIVSTFNMHQQSCKDLQLYLSNLANQIDRETGIGDVPLVILLDDLSEAGSISELVNGALTCKYHKCPYIIGTTNQPVKMTPNHGLHLSFRMLTFSNNVEPANGFLVRYLRRKLVESDSDINANKEELLRVLDWVPKLWYHLHTFLEKHSTSDFLIGPCFFLSCPIGIEDFRTWFIDLWNNSIIPYLQEGAKDGIKVHGQKAAWEDPVEWVRDTLPWPSAQQDQSKLYHLPPPTVGPHSIASPPEDRTVKDSTPSSLDSDPLMAMLLKLQEAANYIESPDRETILDPNLQATL.

M1 carries the post-translational modification N-acetylmethionine. Residues 1–59 (MLGSSVKSVQPEVELSSGGGDEGADEPRGAGRKAAAADGRGMLPKRAKAPGGGGGMAKA) are disordered. Low complexity predominate over residues 32-41 (RKAAAADGRG). Phosphoserine is present on residues S90, S142, and S152. The tract at residues 114 to 225 (DMAKAPKGLG…PVPSAKGQEE (112 aa)) is disordered. T159 carries the phosphothreonine modification. Phosphoserine occurs at positions 194 and 199. Residues 205–214 (SSKAKAQKSS) show a composition bias toward low complexity. Residues 255 to 280 (ESQRKRTVQNVLDLRQNLEETMSSLR) are a coiled coil. A disordered region spans residues 294–336 (YDSDDANPRSVSSLSNRSSPLSWRYGQSSPRLQAGDAPSVGGS). A phosphoserine mark is found at S296, S308, S312, S362, and S391. Over residues 301-315 (PRSVSSLSNRSSPLS) the composition is skewed to low complexity. Disordered regions lie at residues 386-839 (KSGY…PLPS) and 892-989 (MSLP…PMSL). Composition is skewed to low complexity over residues 411–425 (DESS…DASD) and 433–448 (NASS…PTAS). 4 positions are modified to phosphoserine: S452, S474, S476, and S490. Residues 476–486 (SEEKAPKKLEY) are compositionally biased toward basic and acidic residues. The span at 503-519 (ERPESCDDSSKGGELKK) shows a compositional bias: basic and acidic residues. A Phosphoserine modification is found at S528. A Phosphothreonine modification is found at T534. The residue at position 541 (S541) is a Phosphoserine. Position 544 is a phosphothreonine (T544). Over residues 555–566 (GKPEGKATDKGK) the composition is skewed to basic and acidic residues. T572 carries the post-translational modification Phosphothreonine. Positions 581-591 (AGRDRLSDAKK) are enriched in basic and acidic residues. Polar residues-rich tracts occupy residues 615-635 (GTAT…QKSS) and 645-655 (RKTSLDVSNSA). A Phosphoserine modification is found at S648. R688 carries the omega-N-methylarginine modification. Composition is skewed to polar residues over residues 698-710 (IDPS…QGGL) and 724-733 (GRTTPAPVNQ). The stretch at 731-756 (VNQTDREKEKAKAKAVALDSDNISLK) forms a coiled coil. S750, S754, S760, S797, and S808 each carry phosphoserine. The segment covering 751-773 (DNISLKSIGSPESTPKNQASHPT) has biased composition (polar residues). Over residues 805–818 (NSNSLDLPSSSDTT) the composition is skewed to low complexity. A compositionally biased stretch (pro residues) spans 902–913 (TPVPTPPAPPAA). S1000 is subject to Phosphoserine. At T1006 the chain carries Phosphothreonine. Residues 1072–1163 (SSAEERMQSE…SEAQAVIQGA (92 aa)) are a coiled coil. T1170 is modified (phosphothreonine). Disordered regions lie at residues 1172–1204 (KELR…KDAD), 1244–1306 (ATPD…EKKE), 1359–1383 (LKVA…LSSP), and 1810–1843 (KLYH…SLDS). A Phosphoserine modification is found at S1181. Residues 1181-1200 (SSDSISSLNSITSHSSIGSS) are compositionally biased toward low complexity. Polar residues predominate over residues 1246–1264 (PDSSAPSSPKLQHGSTETA). At S1265 the chain carries Phosphoserine. Low complexity predominate over residues 1265–1275 (SPSIKSSTSSS). Residues 1303–1362 (EKKEVSELRSELWEKEMKLTDIRLEALNSAHQLDQLRETMHNMQLEVDLLKAENDRLKVA) are a coiled coil. Residues 1366-1383 (SSGSTPGQVPGSSALSSP) show a composition bias toward polar residues. At S1382 the chain carries Phosphoserine.

Belongs to the Nav/unc-53 family. In terms of assembly, interacts with tubulin. Broadly expressed at low levels. Expressed at high levels in heart, skeletal muscle and placenta.

It is found in the cytoplasm. The protein localises to the cytoskeleton. May be involved in neuronal migration. The protein is Neuron navigator 1 (NAV1) of Homo sapiens (Human).